Reading from the N-terminus, the 555-residue chain is La-related protein 7 (555 aa).

The 92-residue stretch at 36-127 (RSRVKQLLSD…RRKEPLGETP (92 aa)) folds into the HTH La-type RNA-binding domain. Residues 133–211 (RTVYVELLPK…PRKPGIFPKT (79 aa)) enclose the RRM domain. Residues 218 to 327 (PFDAVTQDND…ENKDEELNSL (110 aa)) are disordered. Polar residues-rich tracts occupy residues 238–251 (KNST…NNMD), 258–274 (STVT…STVS), and 284–293 (SQSFEASSGE). A coiled-coil region spans residues 295–356 (QFEMSSKMRK…ERLKVGEEVI (62 aa)). Basic and acidic residues predominate over residues 303–327 (RKVEEEKSELKDLSSENKDEELNSL). Residues 425 to 538 (EFLSGVIVKI…TEKLISKAEK (114 aa)) form the xRRM domain.

The protein belongs to the LARP7 family. As to quaternary structure, core component of the 7SK RNP complex. Associates with box C/D small nucleolar ribonucleoprotein (snoRNP) complexes.

Its subcellular location is the nucleus. The protein resides in the nucleoplasm. In terms of biological role, RNA-binding protein that specifically binds distinct small nuclear RNA (snRNAs) and regulates their processing and function. Specifically binds the 7SK snRNA (7SK RNA) and acts as a core component of the 7SK ribonucleoprotein (RNP) complex, thereby acting as a negative regulator of transcription elongation by RNA polymerase II. The 7SK RNP complex sequesters the positive transcription elongation factor b (P-TEFb) in a large inactive 7SK RNP complex preventing RNA polymerase II phosphorylation and subsequent transcriptional elongation. The 7SK RNP complex also promotes snRNA gene transcription by RNA polymerase II via interaction with the little elongation complex (LEC). LARP7 specifically binds to the highly conserved 3'-terminal U-rich stretch of 7SK RNA; on stimulation, remains associated with 7SK RNA, whereas P-TEFb is released from the complex. LARP7 also acts as a regulator of mRNA splicing fidelity by promoting U6 snRNA processing. Specifically binds U6 snRNAs and associates with a subset of box C/D RNP complexes: promotes U6 snRNA 2'-O-methylation by facilitating U6 snRNA loading into box C/D RNP complexes. U6 snRNA 2'-O-methylation is required for mRNA splicing fidelity. The chain is La-related protein 7 from Danio rerio (Zebrafish).